We begin with the raw amino-acid sequence, 472 residues long: Nucleoporin NUP49/NSP49 (472 aa).

The stretch at 2-3 (FG) is one FG 1 repeat. One copy of the GLFG 1 repeat lies at 14-17 (GLFG). The tract at residues 28 to 104 (NTGFSFGGTQ…TANTGGGLFG (77 aa)) is disordered. The FG 2 repeat unit spans residues 33–34 (FG). Residues 48-51 (GLFG) form a GLFG 2 repeat. Positions 64–80 (SFGQQQQQSQTNAFGGS) are enriched in low complexity. 2 FG repeats span residues 65-66 (FG) and 77-78 (FG). GLFG repeat units lie at residues 86–89 (GLFG) and 101–104 (GLFG). An SLFG 1 repeat occupies 113–116 (SLFG). GLFG repeat units lie at residues 125–128 (GLFG) and 148–151 (GLFG). An SLFG 2 repeat occupies 159–162 (SLFG). A GLFG 7; approximate repeat occupies 175–178 (GMFG). Residues 185-188 (SLFG) form an SLFG 3 repeat. A GLFG 8 repeat occupies 199 to 202 (GLFG). The stretch at 210–213 (SLFG) is one SLFG 4 repeat. Residues 211–242 (LFGSSNNNNNNNNSNNIMSASGGLFGNQQQQL) form a disordered region. The segment covering 214–226 (SSNNNNNNNNSNN) has biased composition (low complexity). Residues 233–236 (GLFG) form a GLFG 9 repeat.

The protein belongs to the nucleoporin GLFG family. In terms of assembly, component of the nuclear pore complex (NPC). NPC constitutes the exclusive means of nucleocytoplasmic transport. NPCs allow the passive diffusion of ions and small molecules and the active, nuclear transport receptor-mediated bidirectional transport of macromolecules such as proteins, RNAs, ribonucleoparticles (RNPs), and ribosomal subunits across the nuclear envelope. Due to its 8-fold rotational symmetry, all subunits are present with 8 copies or multiples thereof. NUP49 is part of the NUP57 subcomplex (NIC96, NSP1, NUP49, NUP57) interacting with NUP57. Interacts through its FG repeats with karyopherins.

The protein localises to the nucleus. It localises to the nuclear pore complex. Its subcellular location is the nucleus membrane. In terms of biological role, functions as a component of the nuclear pore complex (NPC). NPC components, collectively referred to as nucleoporins (NUPs), can play the role of both NPC structural components and of docking or interaction partners for transiently associated nuclear transport factors. Active directional transport is assured by both, a Phe-Gly (FG) repeat affinity gradient for these transport factors across the NPC and a transport cofactor concentration gradient across the nuclear envelope (GSP1 and GSP2 GTPases associated predominantly with GTP in the nucleus, with GDP in the cytoplasm). NUP49 plays an important role in several nuclear transport pathways including poly(A)+ RNA, tRNA, and pre-ribosome transport. In Saccharomyces cerevisiae (strain ATCC 204508 / S288c) (Baker's yeast), this protein is Nucleoporin NUP49/NSP49 (NUP49).